Reading from the N-terminus, the 309-residue chain is Foldase protein PrsA (309 aa).

A signal peptide spans 1-20 (MKKKIVAGAVTLLSVAVLAA). Cys-21 is lipidated: N-palmitoyl cysteine. Cys-21 carries S-diacylglycerol cysteine lipidation. In terms of domain architecture, PpiC spans 144–241 (TPEVTAQIIK…ASYYIVKLVS (98 aa)).

The protein belongs to the PrsA family.

It localises to the cell membrane. The enzyme catalyses [protein]-peptidylproline (omega=180) = [protein]-peptidylproline (omega=0). In terms of biological role, plays a major role in protein secretion by helping the post-translocational extracellular folding of several secreted proteins. This is Foldase protein PrsA from Streptococcus gordonii (strain Challis / ATCC 35105 / BCRC 15272 / CH1 / DL1 / V288).